The chain runs to 932 residues: Protocadherin gamma-A12 (932 aa).

Positions 1-29 (MIPARLHRDYKGLVLLGILLGTLWETGCT) are cleaved as a signal peptide. Cadherin domains are found at residues 30-133 (QIRY…APYF), 134-242 (RESE…APAF), 243-347 (AQPE…APEV), 348-452 (VLTS…PPVF), 453-562 (PQAS…APEI), and 570-683 (DGST…SPAN). At 30 to 692 (QIRYSVPEEL…NSETSDLTLY (663 aa)) the chain is on the extracellular side. N-linked (GlcNAc...) asparagine glycans are attached at residues asparagine 265, asparagine 419, and asparagine 545. The helical transmembrane segment at 693–713 (LVVAVAAVSCVFLAFVILLLA) threads the bilayer. Residues 714 to 932 (LRLRRWHKSR…KKKSGKKEKK (219 aa)) lie on the Cytoplasmic side of the membrane. Disordered regions lie at residues 803–841 (SHGL…WPNN) and 902–932 (ATLT…KEKK). Residues 816-841 (WRFSQAQRPGTSGSQNGDDTGTWPNN) show a composition bias toward polar residues. Positions 922–932 (NKKKSGKKEKK) are enriched in basic residues.

The protein resides in the cell membrane. Its function is as follows. Potential calcium-dependent cell-adhesion protein. May be involved in the establishment and maintenance of specific neuronal connections in the brain. This Homo sapiens (Human) protein is Protocadherin gamma-A12 (PCDHGA12).